Here is a 90-residue protein sequence, read N- to C-terminus: UDP-N-acetylglucosamine 1-carboxyvinyltransferase (90 aa).

It belongs to the EPSP synthase family. MurA subfamily.

It is found in the cytoplasm. The catalysed reaction is phosphoenolpyruvate + UDP-N-acetyl-alpha-D-glucosamine = UDP-N-acetyl-3-O-(1-carboxyvinyl)-alpha-D-glucosamine + phosphate. The protein operates within cell wall biogenesis; peptidoglycan biosynthesis. In terms of biological role, cell wall formation. Adds enolpyruvyl to UDP-N-acetylglucosamine. This Mycobacteroides chelonae (Mycobacterium chelonae) protein is UDP-N-acetylglucosamine 1-carboxyvinyltransferase (murA).